The following is a 78-amino-acid chain: Protein SlyX homolog (78 aa).

This sequence belongs to the SlyX family.

The chain is Protein SlyX homolog from Xanthomonas campestris pv. campestris (strain 8004).